Consider the following 175-residue polypeptide: Flagellar assembly factor FliW (175 aa).

This sequence belongs to the FliW family. As to quaternary structure, interacts with translational regulator CsrA and flagellin(s).

Its subcellular location is the cytoplasm. Acts as an anti-CsrA protein, binds CsrA and prevents it from repressing translation of its target genes, one of which is flagellin. Binds to flagellin and participates in the assembly of the flagellum. This Bdellovibrio bacteriovorus (strain ATCC 15356 / DSM 50701 / NCIMB 9529 / HD100) protein is Flagellar assembly factor FliW.